A 451-amino-acid polypeptide reads, in one-letter code: Chromosomal replication initiator protein DnaA (451 aa).

The interval 1–72 is domain I, interacts with DnaA modulators; it reads MQSIEDIWQE…ANILQEITGR (72 aa). Positions 72-108 are domain II; sequence RLFDVRFIDGEQEENFEYTVIKPNPALDEDGIEIGKH. The segment at 109-325 is domain III, AAA+ region; that stretch reads MLNPRYVFDT…GALIRVVAYS (217 aa). ATP is bound by residues G153, G155, K156, and T157. Positions 326–451 are domain IV, binds dsDNA; sequence SLVNKDITAG…KNLRKSQNMF (126 aa).

The protein belongs to the DnaA family. As to quaternary structure, oligomerizes as a right-handed, spiral filament on DNA at oriC.

The protein localises to the cytoplasm. Functionally, plays an essential role in the initiation and regulation of chromosomal replication. ATP-DnaA binds to the origin of replication (oriC) to initiate formation of the DNA replication initiation complex once per cell cycle. Binds the DnaA box (a 9 base pair repeat at the origin) and separates the double-stranded (ds)DNA. Forms a right-handed helical filament on oriC DNA; dsDNA binds to the exterior of the filament while single-stranded (ss)DNA is stabiized in the filament's interior. The ATP-DnaA-oriC complex binds and stabilizes one strand of the AT-rich DNA unwinding element (DUE), permitting loading of DNA polymerase. After initiation quickly degrades to an ADP-DnaA complex that is not apt for DNA replication. Binds acidic phospholipids. The sequence is that of Chromosomal replication initiator protein DnaA from Listeria welshimeri serovar 6b (strain ATCC 35897 / DSM 20650 / CCUG 15529 / CIP 8149 / NCTC 11857 / SLCC 5334 / V8).